The chain runs to 326 residues: Zinc finger protein 830 (326 aa).

Residues 1 to 11 (MAASRKGKAVK) are compositionally biased toward basic residues. Positions 1 to 37 (MAASRKGKAVKAVKQEDLRRLMQETRRDSGRQKRVES) are disordered. The span at 13 to 36 (VKQEDLRRLMQETRRDSGRQKRVE) shows a compositional bias: basic and acidic residues. Residues 50-72 (CALCDAPVKNALLWQTHVLGKQH) form a C2H2-type zinc finger. Over residues 83–108 (TAPAHTPAPAHTPAHTPAAASSSSST) the composition is skewed to low complexity. Disordered stretches follow at residues 83 to 214 (TAPA…PVRD), 237 to 257 (EMRQ…EEGR), and 276 to 309 (EELR…EEEE). Residues 180-195 (HSGSVSKAEQQESQEP) are compositionally biased toward polar residues. A coiled-coil region spans residues 224–295 (KDQLEREWEE…RSRRRSQRRE (72 aa)). Residues 276-286 (EELRAKQETAR) show a composition bias toward basic and acidic residues. The segment covering 298-309 (PMQEEEPLEEEE) has biased composition (acidic residues).

It is found in the nucleus. The protein localises to the chromosome. Its subcellular location is the nucleus speckle. May act as an important regulator of the cell cycle that participates in the maintenance of genome integrity. The sequence is that of Zinc finger protein 830 from Danio rerio (Zebrafish).